The primary structure comprises 136 residues: Magnetite biomineralization protein Mms6 (136 aa).

At 1 to 85 the chain is on the cytoplasmic side; the sequence is MGEMEREGAT…AVGGTIWSGK (85 aa). Positions 86–95 are GL repeat; sequence GLALGLGMGL. A helical transmembrane segment spans residues 86 to 106; the sequence is GLALGLGMGLGAWGPLILGVV. Over 107-136 the chain is Lumenal; sequence GAGAVYAYMKSRDIEAAQSDEEVELRDALS. Residues 115 to 136 are MIC, self-assembles, binds magnetite, Fe(2+) and Fe(3+); it reads MKSRDIEAAQSDEEVELRDALS.

It belongs to the magnetosome Mms6 family. As to quaternary structure, full length protein oligomerizes and interacts with MamA. May undergo cleavage.

It is found in the magnetosome membrane. Its function is as follows. Promotes the formation of magnetite in Fe(2+)-rich conditions, when magnetite is not readily formed. Binds both Fe(2+) and Fe(3+). May help control the production of crystals with a specific morphology. May function with MamX, MamY amd MamZ in biomineralization. The 4 genes of this operon collectively influence magnetosome size and number. The chain is Magnetite biomineralization protein Mms6 from Magnetospirillum gryphiswaldense (strain DSM 6361 / JCM 21280 / NBRC 15271 / MSR-1).